A 138-amino-acid polypeptide reads, in one-letter code: Ribosome-binding factor A (138 aa).

The protein belongs to the RbfA family. Monomer. Binds 30S ribosomal subunits, but not 50S ribosomal subunits or 70S ribosomes.

The protein localises to the cytoplasm. One of several proteins that assist in the late maturation steps of the functional core of the 30S ribosomal subunit. Associates with free 30S ribosomal subunits (but not with 30S subunits that are part of 70S ribosomes or polysomes). Required for efficient processing of 16S rRNA. May interact with the 5'-terminal helix region of 16S rRNA. This chain is Ribosome-binding factor A, found in Chromobacterium violaceum (strain ATCC 12472 / DSM 30191 / JCM 1249 / CCUG 213 / NBRC 12614 / NCIMB 9131 / NCTC 9757 / MK).